A 711-amino-acid chain; its full sequence is Polyribonucleotide nucleotidyltransferase (711 aa).

Positions 490 and 496 each coordinate Mg(2+). In terms of domain architecture, KH spans 557–616; it reads PRIETMQIPTDKIREVIGSGGKVIREIVETSGAKVDINDDGIIKIASANGEAIKKAYEMI. One can recognise an S1 motif domain in the interval 626 to 694; that stretch reads GKVYTGTVVK…DRGKVRLSMK (69 aa).

The protein belongs to the polyribonucleotide nucleotidyltransferase family. The cofactor is Mg(2+).

It is found in the cytoplasm. It carries out the reaction RNA(n+1) + phosphate = RNA(n) + a ribonucleoside 5'-diphosphate. Its function is as follows. Involved in mRNA degradation. Catalyzes the phosphorolysis of single-stranded polyribonucleotides processively in the 3'- to 5'-direction. The chain is Polyribonucleotide nucleotidyltransferase from Dinoroseobacter shibae (strain DSM 16493 / NCIMB 14021 / DFL 12).